Consider the following 211-residue polypeptide: Ethylene-responsive transcription factor LEP (211 aa).

Disordered regions lie at residues 1–21 and 74–110; these read MNTTSSKSKKKQDDQVGTRFL and NFVYSDMPPSSSVTSIVSPDDPPPPPPPPAPPSNDPV. Residues 19–76 constitute a DNA-binding region (AP2/ERF); sequence RFLGVRRRPWGRYAAEIRDPTTKERHWLGTFDTAEEAALAYDRAARSMRGTRARTNFV. The span at 81–92 shows a compositional bias: low complexity; it reads PPSSSVTSIVSP. Positions 93 to 107 are enriched in pro residues; sequence DDPPPPPPPPAPPSN.

Belongs to the AP2/ERF transcription factor family. ERF subfamily. Expressed in germinating seeds. Present in young shoots, at low levels, especially in leaf primordia and developing leaf blades. Also detected in vascular tissue, mostly in xylem, of young leaves, petioles and hypocotyls.

The protein localises to the nucleus. Functionally, cell division-promoting factor involved in leaf blade differentiation, inflorescence branching, as well as in carpel and silique shape. Promotes the number of xylem cells. Positively regulates the gibberellin signaling pathway leading to germination, hypocotyl elongation, and leaf expansion. Probably acts as a transcriptional activator. Binds to the GCC-box pathogenesis-related promoter element. May be involved in the regulation of gene expression by stress factors and by components of stress signal transduction pathways. The chain is Ethylene-responsive transcription factor LEP (LEP) from Arabidopsis thaliana (Mouse-ear cress).